Consider the following 1770-residue polypeptide: Vitellogenin (1770 aa).

The N-terminal stretch at 1-16 is a signal peptide; it reads MLLLLTLLLFAGTVAA. Positions 22–809 constitute a Vitellogenin domain; that stretch reads WQVGNEYTYL…SEDSVIPRIL (788 aa). Residues C178 and C222 are joined by a disulfide bond. N296 carries N-linked (GlcNAc...) asparagine glycosylation. Residues 373–394 are disordered; it reads SSSSSISSSEENDFWQPKPTLE. An N-linked (GlcNAc...) asparagine glycan is attached at N1067. The region spanning 1442-1635 is the VWFD domain; sequence TSCMLDKTRA…SYALISNQCE (194 aa). Intrachain disulfides connect C1444–C1598 and C1466–C1634.

In terms of tissue distribution, accumulates in the hemolymph. Represents up to 70% of the queen's hemolymph proteins. During the first week of the worker adult life, when it becomes a nurse bee and performs brood-rearing tasks, the vitellogenin titer increases and may account for up to 40% of the total hemolymph proteins.

The protein resides in the secreted. Its function is as follows. Precursor of the egg-yolk proteins that are sources of nutrients during embryonic development. Involved in the differentiation of honeybee larvae into queens. The protein is Vitellogenin (Vg) of Apis mellifera (Honeybee).